A 145-amino-acid polypeptide reads, in one-letter code: Ribonuclease P protein component (145 aa).

Residues Leu-120 to Ala-130 are compositionally biased toward low complexity. A disordered region spans residues Leu-120–Leu-145. The segment covering His-134–Leu-145 has biased composition (polar residues).

The protein belongs to the RnpA family. In terms of assembly, consists of a catalytic RNA component (M1 or rnpB) and a protein subunit.

The enzyme catalyses Endonucleolytic cleavage of RNA, removing 5'-extranucleotides from tRNA precursor.. Its function is as follows. RNaseP catalyzes the removal of the 5'-leader sequence from pre-tRNA to produce the mature 5'-terminus. It can also cleave other RNA substrates such as 4.5S RNA. The protein component plays an auxiliary but essential role in vivo by binding to the 5'-leader sequence and broadening the substrate specificity of the ribozyme. This is Ribonuclease P protein component from Xanthomonas oryzae pv. oryzae (strain MAFF 311018).